Here is a 920-residue protein sequence, read N- to C-terminus: Coatomer subunit beta'-1 (920 aa).

WD repeat units follow at residues 13–52 (QRSE…MVKS), 55–94 (VTEL…KIKV), 97–136 (AHAD…LCTQ), 140–180 (GHSH…PNFT), 183–224 (AHLK…CVQT), 227–266 (GHTH…LENT), 350–392 (TCDL…GSAL), and 460–500 (RIDV…SYFD). The segment at 850-920 (LEQGDVLDEV…EQWVLTPPQE (71 aa)) is disordered. Over residues 854–875 (DVLDEVGEEGEDGEEEEEEDRQ) the composition is skewed to acidic residues.

Belongs to the WD repeat COPB2 family. In terms of assembly, oligomeric complex that consists of at least the alpha, beta, beta', gamma, delta, epsilon and zeta subunits.

The protein localises to the cytoplasm. The protein resides in the golgi apparatus membrane. It localises to the cytoplasmic vesicle. Its subcellular location is the COPI-coated vesicle membrane. Functionally, the coatomer is a cytosolic protein complex that binds to dilysine motifs and reversibly associates with Golgi non-clathrin-coated vesicles, which further mediate biosynthetic protein transport from the ER, via the Golgi up to the trans Golgi network. Coatomer complex is required for budding from Golgi membranes, and is essential for the retrograde Golgi-to-ER transport of dilysine-tagged proteins. The chain is Coatomer subunit beta'-1 from Arabidopsis thaliana (Mouse-ear cress).